The sequence spans 450 residues: Bifunctional protein GlmU (450 aa).

Positions 1–229 (MRRHAIILAA…VEEIMGVNDR (229 aa)) are pyrophosphorylase. UDP-N-acetyl-alpha-D-glucosamine is bound by residues 8–11 (LAAG), Lys-22, Gln-72, and 77–78 (GT). Mg(2+) is bound at residue Asp-102. UDP-N-acetyl-alpha-D-glucosamine contacts are provided by Gly-139, Glu-154, and Asn-227. Asn-227 is a binding site for Mg(2+). The tract at residues 230 to 250 (VMLSQAEKAMQRRTNHYHMLN) is linker. The interval 251-450 (GVTIIDPDST…RQTTKEGYRK (200 aa)) is N-acetyltransferase. UDP-N-acetyl-alpha-D-glucosamine is bound by residues Arg-332 and Lys-350. The active-site Proton acceptor is His-362. The UDP-N-acetyl-alpha-D-glucosamine site is built by Tyr-365 and Asn-376. Residues 385–386 (NY), Ala-422, and Arg-439 contribute to the acetyl-CoA site.

The protein in the N-terminal section; belongs to the N-acetylglucosamine-1-phosphate uridyltransferase family. It in the C-terminal section; belongs to the transferase hexapeptide repeat family. In terms of assembly, homotrimer. Mg(2+) serves as cofactor.

The protein localises to the cytoplasm. The catalysed reaction is alpha-D-glucosamine 1-phosphate + acetyl-CoA = N-acetyl-alpha-D-glucosamine 1-phosphate + CoA + H(+). It catalyses the reaction N-acetyl-alpha-D-glucosamine 1-phosphate + UTP + H(+) = UDP-N-acetyl-alpha-D-glucosamine + diphosphate. Its pathway is nucleotide-sugar biosynthesis; UDP-N-acetyl-alpha-D-glucosamine biosynthesis; N-acetyl-alpha-D-glucosamine 1-phosphate from alpha-D-glucosamine 6-phosphate (route II): step 2/2. It participates in nucleotide-sugar biosynthesis; UDP-N-acetyl-alpha-D-glucosamine biosynthesis; UDP-N-acetyl-alpha-D-glucosamine from N-acetyl-alpha-D-glucosamine 1-phosphate: step 1/1. The protein operates within bacterial outer membrane biogenesis; LPS lipid A biosynthesis. Its function is as follows. Catalyzes the last two sequential reactions in the de novo biosynthetic pathway for UDP-N-acetylglucosamine (UDP-GlcNAc). The C-terminal domain catalyzes the transfer of acetyl group from acetyl coenzyme A to glucosamine-1-phosphate (GlcN-1-P) to produce N-acetylglucosamine-1-phosphate (GlcNAc-1-P), which is converted into UDP-GlcNAc by the transfer of uridine 5-monophosphate (from uridine 5-triphosphate), a reaction catalyzed by the N-terminal domain. In Staphylococcus aureus (strain USA300), this protein is Bifunctional protein GlmU.